A 412-amino-acid polypeptide reads, in one-letter code: Thyroxine-binding globulin (412 aa).

The N-terminal stretch at 1 to 16 (MPLFFSLVLLILGLHC) is a signal peptide. N-linked (GlcNAc...) asparagine glycosylation is found at Asn35, Asn98, Asn164, and Asn252. The thyroxine site is built by Asn292 and Lys395.

This sequence belongs to the serpin family. As to expression, expressed by the liver and secreted in plasma.

Its subcellular location is the secreted. Functionally, major thyroid hormone transport protein in serum. This Ovis aries (Sheep) protein is Thyroxine-binding globulin (SERPINA7).